The primary structure comprises 319 residues: Cytochrome c biogenesis protein CcsA (319 aa).

5 helical membrane passes run 14 to 34 (AFAVLFLTMLLYWCGAAFPQW), 46 to 66 (AIANLCITGLLAARWIEGGYF), 74 to 94 (SLFFLCWGLTAMHFVAESISG), 97 to 117 (LVGVVTAPVAMGITAFAALSL), and 142 to 162 (VMMLSYATLMVGSLLAIALLV). A disordered region spans residues 175–201 (SVGTGSFRSRRPEPSLEASTGNGGTTV). Residues 191-201 (EASTGNGGTTV) are compositionally biased toward polar residues. A run of 3 helical transmembrane segments spans residues 227–247 (MIGLGFPLLTIGIISGAVWAN), 254–274 (WSWDPKETWALIVWLVYAAYL), and 288–308 (AILATVGFGVVWVCYLGVNLL).

This sequence belongs to the CcmF/CycK/Ccl1/NrfE/CcsA family. May interact with ccs1.

Its subcellular location is the cellular thylakoid membrane. In terms of biological role, required during biogenesis of c-type cytochromes (cytochrome c6 and cytochrome f) at the step of heme attachment. The polypeptide is Cytochrome c biogenesis protein CcsA (Thermosynechococcus vestitus (strain NIES-2133 / IAM M-273 / BP-1)).